The following is a 1031-amino-acid chain: Error-prone DNA polymerase (1031 aa).

Belongs to the DNA polymerase type-C family. DnaE2 subfamily.

The protein resides in the cytoplasm. It catalyses the reaction DNA(n) + a 2'-deoxyribonucleoside 5'-triphosphate = DNA(n+1) + diphosphate. In terms of biological role, DNA polymerase involved in damage-induced mutagenesis and translesion synthesis (TLS). It is not the major replicative DNA polymerase. The protein is Error-prone DNA polymerase of Pseudomonas aeruginosa (strain ATCC 15692 / DSM 22644 / CIP 104116 / JCM 14847 / LMG 12228 / 1C / PRS 101 / PAO1).